A 78-amino-acid chain; its full sequence is U7-lycotoxin-Ls1d (78 aa).

A signal peptide spans 1 to 22 (MKLIIFTGLALLLIVSLIDVEA). Residues 23–26 (QNEG) constitute a propeptide that is removed on maturation.

The protein belongs to the neurotoxin 19 (CSTX) family. 07 (U7-Lctx) subfamily. Contains 4 disulfide bonds. As to expression, expressed by the venom gland.

It localises to the secreted. This is U7-lycotoxin-Ls1d from Lycosa singoriensis (Wolf spider).